A 1380-amino-acid polypeptide reads, in one-letter code: DNA-directed RNA polymerase subunit beta (1380 aa).

The protein belongs to the RNA polymerase beta chain family. In terms of assembly, the RNAP catalytic core consists of 2 alpha, 1 beta, 1 beta' and 1 omega subunit. When a sigma factor is associated with the core the holoenzyme is formed, which can initiate transcription.

The enzyme catalyses RNA(n) + a ribonucleoside 5'-triphosphate = RNA(n+1) + diphosphate. Its function is as follows. DNA-dependent RNA polymerase catalyzes the transcription of DNA into RNA using the four ribonucleoside triphosphates as substrates. The polypeptide is DNA-directed RNA polymerase subunit beta (Rhizobium meliloti (strain 1021) (Ensifer meliloti)).